We begin with the raw amino-acid sequence, 547 residues long: Riboflavin transporter RibJ (547 aa).

Residues 1–11 (MLPSFTRKPAD) lie on the Cytoplasmic side of the membrane. The chain crosses the membrane as a helical span at residues 12 to 32 (HPIGYLVALSGLLMQLMSYGI). Over 33–58 (DNSYSIFSEDMHNDPSLGFPSITAIS) the chain is Extracellular. The helical transmembrane segment at 59 to 79 (LGNSVSLGLSPAFGVLAGFCV) threads the bilayer. Residues 80–85 (DRLPPR) lie on the Cytoplasmic side of the membrane. Residues 86 to 106 (FMMALSTILLFTGLWISSTLA) form a helical membrane-spanning segment. Residues 107-108 (AN) lie on the Extracellular side of the membrane. The chain crosses the membrane as a helical span at residues 109 to 129 (IYVVTFTYCLFASIGTACMLS). The Cytoplasmic portion of the chain corresponds to 130–144 (PGAAATSSWFNRYQG). A helical transmembrane segment spans residues 145–165 (LAMGINFAGGGIGSAIIPPLA). Over 166–175 (GKWVVAYGWR) the chain is Extracellular. A helical transmembrane segment spans residues 176–196 (KAFQLMSIFCAIGVLATALSA). Residues 197–344 (RRREPKRDDS…MFTLPFMGNF (148 aa)) lie on the Cytoplasmic side of the membrane. Positions 198-293 (RREPKRDDSS…EGLDVTEQSQ (96 aa)) are disordered. Residues 244–255 (NEGKEDVREMGR) are compositionally biased toward basic and acidic residues. Residues 345-365 (LCWFIYSWAFYSLIYAAVPYI) form a helical membrane-spanning segment. The Extracellular portion of the chain corresponds to 366-386 (SSMGKPGTVYAGVPPIPTDVA). The chain crosses the membrane as a helical span at residues 387 to 407 (ATLFTFYGVFQVVGSVLVGWL). Over 408 to 412 (ASLVT) the chain is Cytoplasmic. The chain crosses the membrane as a helical span at residues 413 to 433 (AEFAYVFCATVGGIGCGLLAL). Topologically, residues 434–437 (GRSY) are extracellular. A helical transmembrane segment spans residues 438-458 (VAFALLLCIIGFCMAGMFAVM). The Cytoplasmic segment spans residues 459 to 470 (PTLIATHLYGPN). A helical transmembrane segment spans residues 471–491 (LGFYFGAVFLAGVVGGFVAPP). Residues 492–505 (MQATIQLRNNGSYA) are Extracellular-facing. A glycan (N-linked (GlcNAc...) asparagine) is linked at asparagine 501. The chain crosses the membrane as a helical span at residues 506–526 (FVCVVMSVSMTLSALVCYATL). At 527 to 547 (WRSKRSGIVLAARKTKLVEIM) the chain is on the cytoplasmic side.

It belongs to the major facilitator superfamily. RibJ family.

The protein resides in the cell membrane. Functionally, transporter involved in riboflavin (vitamin B2) uptake. Also transports FMN and FAD. The sequence is that of Riboflavin transporter RibJ from Trypanosoma brucei brucei (strain 927/4 GUTat10.1).